The chain runs to 153 residues: Transcriptional repressor NrdR (153 aa).

Residues 3-34 (CPSCQHHGTRVLDSRPVDEGRSIRRRRECEQC) fold into a zinc finger. Positions 49 to 139 (LIVVKKQGMR…VYRQFKDLNV (91 aa)) constitute an ATP-cone domain.

Belongs to the NrdR family. Zn(2+) serves as cofactor.

In terms of biological role, negatively regulates transcription of bacterial ribonucleotide reductase nrd genes and operons by binding to NrdR-boxes. The polypeptide is Transcriptional repressor NrdR (Geobacillus sp. (strain WCH70)).